Consider the following 279-residue polypeptide: Sarcosine/dimethylglycine N-methyltransferase (279 aa).

The protein belongs to the methyltransferase superfamily. In terms of assembly, monomer.

It carries out the reaction sarcosine + 2 S-adenosyl-L-methionine = glycine betaine + 2 S-adenosyl-L-homocysteine + 2 H(+). It catalyses the reaction sarcosine + S-adenosyl-L-methionine = N,N-dimethylglycine + S-adenosyl-L-homocysteine + H(+). The enzyme catalyses N,N-dimethylglycine + S-adenosyl-L-methionine = glycine betaine + S-adenosyl-L-homocysteine + H(+). It functions in the pathway amine and polyamine biosynthesis; betaine biosynthesis via glycine pathway; betaine from glycine: step 2/3. It participates in amine and polyamine biosynthesis; betaine biosynthesis via glycine pathway; betaine from glycine: step 3/3. P-chloromercuribenzoate acid inhibits 23% of the SDMT activities on sarcosine and dimethylglycine, and S-adenosylhomocysteine (AdoHcy) inhibits completely GSMT activities. Its function is as follows. Catalyzes the methylation of sarcosine and dimethylglycine to dimethylglycine and betaine, respectively, with S-adenosylmethionine (AdoMet) acting as the methyl donor. It has strict specificity for sarcosine and dimethylglycine as the methyl group acceptors. The sequence is that of Sarcosine/dimethylglycine N-methyltransferase from Halorhodospira halochloris (Ectothiorhodospira halochloris).